We begin with the raw amino-acid sequence, 494 residues long: Putative transporter SVOPL (494 aa).

10 helical membrane-spanning segments follow: residues 48-68, 86-106, 121-141, 179-199, 203-223, 281-301, 350-370, 385-405, 431-451, and 460-480; these read IALFLIMGSTGVVEAMEIMLI, VAFVTTMVFFGYMVSSILFGL, FLWGAYFSLLTSFSPSYIWFV, VFWLAGSLLIISMASVVIPTI, WLIRIASIPGIILIMAFKFIP, TLQIWIIWLGISFAYYGVILA, IISTLGEIALNPLNILGINFL, LFFLLLNICTSSAGLIGFLFM, AIGMGTSGSLCRIGAMVAPFI, and FLGALCLFSSVCVVCAISAFT.

The protein belongs to the major facilitator superfamily.

It is found in the membrane. The polypeptide is Putative transporter SVOPL (Svopl) (Mus musculus (Mouse)).